Reading from the N-terminus, the 398-residue chain is 1-deoxy-D-xylulose 5-phosphate reductoisomerase (398 aa).

Positions 11, 12, 13, 14, 38, 39, and 125 each coordinate NADPH. K126 is a binding site for 1-deoxy-D-xylulose 5-phosphate. E127 lines the NADPH pocket. D151 contacts Mn(2+). Residues S152, E153, S179, and H202 each coordinate 1-deoxy-D-xylulose 5-phosphate. E153 contributes to the Mn(2+) binding site. NADPH is bound at residue G208. 1-deoxy-D-xylulose 5-phosphate contacts are provided by S215, N220, K221, and E224. E224 lines the Mn(2+) pocket.

Belongs to the DXR family. Mg(2+) is required as a cofactor. Requires Mn(2+) as cofactor.

It carries out the reaction 2-C-methyl-D-erythritol 4-phosphate + NADP(+) = 1-deoxy-D-xylulose 5-phosphate + NADPH + H(+). The protein operates within isoprenoid biosynthesis; isopentenyl diphosphate biosynthesis via DXP pathway; isopentenyl diphosphate from 1-deoxy-D-xylulose 5-phosphate: step 1/6. Its function is as follows. Catalyzes the NADPH-dependent rearrangement and reduction of 1-deoxy-D-xylulose-5-phosphate (DXP) to 2-C-methyl-D-erythritol 4-phosphate (MEP). The polypeptide is 1-deoxy-D-xylulose 5-phosphate reductoisomerase (Burkholderia multivorans (strain ATCC 17616 / 249)).